The following is a 207-amino-acid chain: Large ribosomal subunit protein uL4 (207 aa).

The disordered stretch occupies residues 43–80 (RRRSGTAKSKGRSEVSGSTRKLYRQKGTGNARSGSVKS). The segment covering 69–78 (GTGNARSGSV) has biased composition (polar residues).

The protein belongs to the universal ribosomal protein uL4 family. Part of the 50S ribosomal subunit.

Functionally, one of the primary rRNA binding proteins, this protein initially binds near the 5'-end of the 23S rRNA. It is important during the early stages of 50S assembly. It makes multiple contacts with different domains of the 23S rRNA in the assembled 50S subunit and ribosome. In terms of biological role, forms part of the polypeptide exit tunnel. This chain is Large ribosomal subunit protein uL4, found in Desulforapulum autotrophicum (strain ATCC 43914 / DSM 3382 / VKM B-1955 / HRM2) (Desulfobacterium autotrophicum).